The following is a 384-amino-acid chain: Surfeit locus protein 1-like (384 aa).

Helical transmembrane passes span 55 to 75 (ALLWYLVGFTTYGLGETYKFL), 302 to 322 (IPLDYHLYTVLWHWSSLTCFI), and 338 to 358 (IGVEPILIPISILVFICTKIY).

Belongs to the SURF1 (TC 3.D.4.8) family.

The protein resides in the mitochondrion inner membrane. Its function is as follows. May be involved in the biogenesis of the COX complex. The protein is Surfeit locus protein 1-like of Arabidopsis thaliana (Mouse-ear cress).